The sequence spans 182 residues: Ribulose bisphosphate carboxylase small subunit, chloroplastic 4 (182 aa).

The transit peptide at 1–41 (MSAAMMNKSVVLSKQCTKPAATPKVVTSKRSFASTVANKNR) directs the protein to the chloroplast.

The protein belongs to the RuBisCO small chain family. In terms of assembly, heterohexadecamer of 8 large and 8 small subunits.

The protein resides in the plastid. It localises to the chloroplast. Its function is as follows. RuBisCO catalyzes two reactions: the carboxylation of D-ribulose 1,5-bisphosphate, the primary event in carbon dioxide fixation, as well as the oxidative fragmentation of the pentose substrate. Both reactions occur simultaneously and in competition at the same active site. Although the small subunit is not catalytic it is essential for maximal activity. This is Ribulose bisphosphate carboxylase small subunit, chloroplastic 4 from Acetabularia acetabulum (Mermaid's wine glass).